We begin with the raw amino-acid sequence, 167 residues long: Caltractin (167 aa).

The span at Met-1–Gly-18 shows a compositional bias: basic residues. Positions Met-1–Lys-23 are disordered. 4 EF-hand domains span residues Gln-22 to Glu-57, Met-58 to Glu-93, Asp-95 to Asn-130, and Phe-131 to Ala-166. Residues Asp-35, Asp-37, Ser-39, Thr-41, Glu-46, Asp-71, Asp-73, Ser-75, Glu-82, Asp-108, Asp-110, Asn-112, Lys-114, Asp-119, Asp-144, Asp-146, Asp-148, Glu-150, and Glu-155 each contribute to the Ca(2+) site.

Belongs to the centrin family.

It localises to the cytoplasm. It is found in the cytoskeleton. The protein localises to the microtubule organizing center. Plays a fundamental role in microtubule-organizing center structure and function. The chain is Caltractin from Atriplex nummularia (Old man saltbush).